We begin with the raw amino-acid sequence, 483 residues long: Sphingomyelin synthase-related 1 (483 aa).

3 helical membrane passes run 182 to 202 (LIAF…MVLV), 230 to 250 (FDMC…VLFF), and 261 to 281 (MFSL…ITSL). His330 is an active-site residue. Residues 349–369 (WTGLHTFTWVLNCFAIFLILA) form a helical membrane-spanning segment. Active-site residues include His373 and Asp377. The helical transmembrane segment at 376–396 (IDVFIAFYISSRMFLYYHAYA) threads the bilayer. The Cytoplasmic segment spans residues 397–483 (YNHAGITATD…NSKNHTKKHN (87 aa)). The segment covering 450–461 (EPKITPKSDSSR) has biased composition (basic and acidic residues). Positions 450 to 483 (EPKITPKSDSSRKRSSVVAAKQNGNSKNHTKKHN) are disordered.

Belongs to the sphingomyelin synthase family.

The protein resides in the membrane. In Caenorhabditis elegans, this protein is Sphingomyelin synthase-related 1.